The chain runs to 283 residues: Elongation factor Ts (283 aa).

The tract at residues 79-82 (TDFV) is involved in Mg(2+) ion dislocation from EF-Tu.

The protein belongs to the EF-Ts family.

Its subcellular location is the cytoplasm. Its function is as follows. Associates with the EF-Tu.GDP complex and induces the exchange of GDP to GTP. It remains bound to the aminoacyl-tRNA.EF-Tu.GTP complex up to the GTP hydrolysis stage on the ribosome. This Shewanella putrefaciens (strain CN-32 / ATCC BAA-453) protein is Elongation factor Ts.